Consider the following 126-residue polypeptide: Protein ApaG (126 aa).

Positions 2-126 (SALDTSIRVE…FRLATPGLLH (125 aa)) constitute an ApaG domain.

The sequence is that of Protein ApaG from Shewanella baltica (strain OS223).